A 693-amino-acid chain; its full sequence is Heat shock protein homolog SSE2 (693 aa).

The interval 653–693 (LRANQETSKMNDIAEKLAEQRRARAASDDSDDNNDENMDLD) is disordered. A compositionally biased stretch (basic and acidic residues) spans 664 to 679 (DIAEKLAEQRRARAAS). Acidic residues predominate over residues 680-693 (DDSDDNNDENMDLD).

The protein belongs to the heat shock protein 70 family.

In terms of biological role, has a calcium-dependent calmodulin-binding activity. This Saccharomyces cerevisiae (strain ATCC 204508 / S288c) (Baker's yeast) protein is Heat shock protein homolog SSE2 (SSE2).